A 423-amino-acid polypeptide reads, in one-letter code: D-tagatose-1,6-bisphosphate aldolase subunit GatZ (423 aa).

The protein belongs to the GatZ/KbaZ family. GatZ subfamily. As to quaternary structure, forms a complex with GatY.

It participates in carbohydrate metabolism; D-tagatose 6-phosphate degradation; D-glyceraldehyde 3-phosphate and glycerone phosphate from D-tagatose 6-phosphate: step 2/2. In terms of biological role, component of the tagatose-1,6-bisphosphate aldolase GatYZ that is required for full activity and stability of the Y subunit. Could have a chaperone-like function for the proper and stable folding of GatY. When expressed alone, GatZ does not show any aldolase activity. Is involved in the catabolism of galactitol. The polypeptide is D-tagatose-1,6-bisphosphate aldolase subunit GatZ (Salmonella paratyphi B (strain ATCC BAA-1250 / SPB7)).